A 164-amino-acid polypeptide reads, in one-letter code: Phosphopantetheine adenylyltransferase (164 aa).

Substrate is bound at residue Ser-11. ATP-binding positions include 11–12 (SF) and His-19. Substrate is bound by residues Lys-43, Leu-75, and Arg-89. Residues 90-92 (GLR), Glu-100, and 125-131 (YGYLSSS) contribute to the ATP site.

This sequence belongs to the bacterial CoaD family. In terms of assembly, homohexamer. Mg(2+) serves as cofactor.

The protein resides in the cytoplasm. The catalysed reaction is (R)-4'-phosphopantetheine + ATP + H(+) = 3'-dephospho-CoA + diphosphate. It functions in the pathway cofactor biosynthesis; coenzyme A biosynthesis; CoA from (R)-pantothenate: step 4/5. In terms of biological role, reversibly transfers an adenylyl group from ATP to 4'-phosphopantetheine, yielding dephospho-CoA (dPCoA) and pyrophosphate. In Geobacter sulfurreducens (strain ATCC 51573 / DSM 12127 / PCA), this protein is Phosphopantetheine adenylyltransferase.